Reading from the N-terminus, the 644-residue chain is Kelch-like protein 34 (644 aa).

Residues 29 to 96 (CDVTLETEGS…IYTAWLSLSM (68 aa)) enclose the BTB domain. The BACK domain maps to 131 to 238 (CCFAANVAAR…PADVLRRVYS (108 aa)). The disordered stretch occupies residues 304–329 (AARGQVAAPEPEEEEEELEEEEEEEE). The segment covering 313 to 329 (EPEEEEEELEEEEEEEE) has biased composition (acidic residues). 6 Kelch repeats span residues 320–366 (ELEE…TAGN), 367–425 (FLFV…AVGE), 426–473 (RLLA…VGDR), 475–526 (VVYI…VLRG), 528–571 (VFAF…VVEE), and 573–623 (ALLL…VLQL).

In Homo sapiens (Human), this protein is Kelch-like protein 34 (KLHL34).